Consider the following 1108-residue polypeptide: Retinal guanylyl cyclase 2 (1108 aa).

An N-terminal signal peptide occupies residues 1-50; sequence MFLGPWPFSRLLSWFAISSRLSGQHGLTSSKFLRYLCLLALLPLIWWGQA. Over 51–465 the chain is Extracellular; it reads LPYKIGVIGP…QGKICQGGID (415 aa). Cys-104 and Cys-132 are oxidised to a cystine. A helical transmembrane segment spans residues 466–490; it reads PALAMMVCFALLLALLSINGFAYFI. The Cytoplasmic portion of the chain corresponds to 491-1108; it reads RRRINKIQLI…AERQLVRNKP (618 aa). Residues 532 to 812 enclose the Protein kinase domain; it reads FQIISEVQSG…DEIFNQFKTF (281 aa). Residues 884 to 1014 enclose the Guanylate cyclase domain; the sequence is TLYFSDIVGF…DTVNTASRME (131 aa).

The protein belongs to the adenylyl cyclase class-4/guanylyl cyclase family. In terms of assembly, homodimer. Interacts with RD3; promotes the exit of GUCY2F from the endoplasmic reticulum and its trafficking to the photoreceptor outer segments. There are 9 conserved cysteine residues in sensory guanylate cyclases, 6 in the extracellular domain, which may be involved in intra- or interchain disulfide bonds. In terms of tissue distribution, expressed only in the eye.

It is found in the membrane. It localises to the photoreceptor outer segment membrane. It catalyses the reaction GTP = 3',5'-cyclic GMP + diphosphate. Activated by GUCA1B when free calcium ions concentration is low, and inhibited by GUCA1B when free calcium ions concentration is high. Inhibited by RD3. Its function is as follows. Responsible for the synthesis of cyclic GMP (cGMP) in rods and cones of photoreceptors. Plays an essential role in phototransduction, by mediating cGMP replenishment. May also participate in the trafficking of membrane-asociated proteins to the photoreceptor outer segment membrane. This chain is Retinal guanylyl cyclase 2 (Gucy2f), found in Rattus norvegicus (Rat).